Consider the following 208-residue polypeptide: Small ribosomal subunit protein uS4 (208 aa).

In terms of domain architecture, S4 RNA-binding spans 98–161; the sequence is RRLDNVVYRL…KASPRIKELV (64 aa).

This sequence belongs to the universal ribosomal protein uS4 family. As to quaternary structure, part of the 30S ribosomal subunit. Contacts protein S5. The interaction surface between S4 and S5 is involved in control of translational fidelity.

Its function is as follows. One of the primary rRNA binding proteins, it binds directly to 16S rRNA where it nucleates assembly of the body of the 30S subunit. In terms of biological role, with S5 and S12 plays an important role in translational accuracy. This Desulforamulus reducens (strain ATCC BAA-1160 / DSM 100696 / MI-1) (Desulfotomaculum reducens) protein is Small ribosomal subunit protein uS4.